The sequence spans 85 residues: UPF0297 protein Clos_1665 (85 aa).

Belongs to the UPF0297 family.

This Alkaliphilus oremlandii (strain OhILAs) (Clostridium oremlandii (strain OhILAs)) protein is UPF0297 protein Clos_1665.